Consider the following 1668-residue polypeptide: Chitin synthase chs-2 (1668 aa).

Positions 1 to 19 are enriched in basic and acidic residues; that stretch reads MMNTLDHRPLGRMETMEGK. The interval 1–51 is disordered; that stretch reads MMNTLDHRPLGRMETMEGKPDEDEVPTSSNSDAKGKGYYYSSGTVPTDDST. At 1–116 the chain is on the cytoplasmic side; the sequence is MMNTLDHRPL…HGFWHDASLQ (116 aa). Residues 117-137 traverse the membrane as a helical segment; that stretch reads VLKLATFLVLFLLTLGSAVVA. The Extracellular segment spans residues 138-176; it reads KSTFILMTSAIGWGGQTITICNQVISEATQNTVKLKNAH. Residues 177 to 197 form a helical membrane-spanning segment; sequence VVKWVWATLLALSAPEALCFV. At 198–212 the chain is on the cytoplasmic side; that stretch reads RSMHRTMFRNVKRPT. Residues 213–233 form a helical membrane-spanning segment; it reads FIQFVFVLIIETFHSIGVGIL. Topologically, residues 234–242 are extracellular; sequence VFRIFPDLD. The chain crosses the membrane as a helical span at residues 243-263; sequence AVTAAQLTNAMCFVPAILSVI. Topologically, residues 264-271 are cytoplasmic; that stretch reads SRKPNKSA. Residues 272–292 traverse the membrane as a helical segment; that stretch reads LLLVIIDFAAIAAQSSGFWAL. Over 293-301 the chain is Extracellular; it reads PMFLPNLQK. A helical transmembrane segment spans residues 302–322; that stretch reads HLVAIPVSLTLISLAWWQNFV. Residues 323–347 are Cytoplasmic-facing; it reads HRDSVFPPVRTLAKFAQRLSERRSK. The chain crosses the membrane as a helical span at residues 348-368; sequence TYAFVSLWKICIYVVCCFLFI. Residues 369–487 lie on the Extracellular side of the membrane; sequence SSRMKIEDML…IYSNYVERNQ (119 aa). An N-linked (GlcNAc...) asparagine glycan is attached at Asn396. The chain crosses the membrane as a helical span at residues 488–508; sequence LTMAYDALWLVIFQFGAVFVC. The Cytoplasmic portion of the chain corresponds to 509 to 522; it reads YHSSKFACKVMMQR. Residues 523-543 form a helical membrane-spanning segment; that stretch reads MGFALPMALSVPVTVLLLSTN. Residues 544-576 are Extracellular-facing; it reads CRMRQKDSCYGTNVLTVELFWQCNGASMSLADF. A helical transmembrane segment spans residues 577 to 597; sequence ILTPQTWIWLCWLASQFWITI. The Cytoplasmic segment spans residues 598–1045; that stretch reads HLWNPKHERL…ISIWYIIYQL (448 aa). A helical transmembrane segment spans residues 1046-1066; the sequence is VMLISSILGPGTIFVMIIGAI. The Extracellular portion of the chain corresponds to 1067–1074; the sequence is SISFSIDT. Residues 1075–1095 traverse the membrane as a helical segment; that stretch reads LISLVIVSIPVVVFIVVCLTA. Residues 1096–1100 lie on the Cytoplasmic side of the membrane; sequence KPEHQ. A helical transmembrane segment spans residues 1101 to 1121; it reads LICAQTIGAIFAMLMTAVVVG. The Extracellular portion of the chain corresponds to 1122–1136; that stretch reads TSLQLQKDGLLSPHS. The helical transmembrane segment at 1137–1157 threads the bilayer; it reads MFTVAVATSFLTAAILHPLEF. Thr1158 is a topological domain (cytoplasmic). The helical transmembrane segment at 1159–1179 threads the bilayer; sequence CIIPGTIYFLAIPCMYMLLPI. Over 1180–1375 the chain is Extracellular; sequence YSVCNMHTVS…RAGLIAIRNS (196 aa). The tract at residues 1192 to 1216 is disordered; that stretch reads TREDPRPTEKNTLAKKTPGNLESGD. Residues 1280 to 1335 are a coiled coil; that stretch reads QIDKCSEADEDEQAEIEDALEMSNQSHAAKKNQKWKQAQSEAWLADKALKRAEREY. Asn1303 is a glycosylation site (N-linked (GlcNAc...) asparagine). Residues 1376–1396 traverse the membrane as a helical segment; that stretch reads HTVYFLMINIVFIISVLVLQI. Residues 1397–1440 are Cytoplasmic-facing; that stretch reads HKDCLNIEWPLGPKFNHTVRPCYANHDDNQKEEVWVMTRLQLEP. Residues 1441–1461 form a helical membrane-spanning segment; sequence IGLVFLIFFVSILVIQFLAML. At 1462-1668 the chain is on the extracellular side; that stretch reads CHRFGTLAHI…SSGDVELRRF (207 aa). The tract at residues 1625-1668 is disordered; it reads RLFTAQQDQNSPTSDGNRRKSNSRPWDQPTSSATSSGDVELRRF. Polar residues-rich tracts occupy residues 1628 to 1639 and 1647 to 1661; these read TAQQDQNSPTSD and SRPW…TSSG.

The protein belongs to the chitin synthase family. Class IV subfamily.

It localises to the cell membrane. It carries out the reaction [(1-&gt;4)-N-acetyl-beta-D-glucosaminyl](n) + UDP-N-acetyl-alpha-D-glucosamine = [(1-&gt;4)-N-acetyl-beta-D-glucosaminyl](n+1) + UDP + H(+). Its function is as follows. May be involved in chitin synthesis in the pharynx during larval development. This Caenorhabditis elegans protein is Chitin synthase chs-2.